A 461-amino-acid chain; its full sequence is MKNYRTESDSFGEIQIEEKFYWGAQTQRSLENFKIGKQKMPEILIRALAILKKCAAQVNYEFGDLEAKIATSIDKATDRILEGEFEDNFPLVVWQTGSGTQTNMNMNEVIASIANEELTSKKGGKSPVHPNDHVNKGQSSNDSFPTAMHIATVLATKQQLIPALNNLLTSLQDKSKDWDKIIKIGRTHLQDATPLTLKQEFSGYITQIEYALERIEDALKKVYLLAQGGTAVGTAINSKIGFDIKFAEKVAEFTKQPFKTAPNKFESLAAHDALVEFSGTLNTIAVSLMKIANDIRLLGSGPRCGLGELHLPENEPGSSIMPGKVNPTQVEALTMVCSQVMGNHVTVTIAGSNGHLELNVFKPVIIYNILQSIELLSDSVNSFVTHCVKGLEPNIARINDLRDKSLMLVTALNPHIGYDNAAKIAKEAHKHGITLKEAAKKLNLLSEEEFDKIVVPEKMIG.

Substrate contacts are provided by residues 98–100, 129–132, 139–141, and Thr-187; these read SGT, HPND, and SSN. The disordered stretch occupies residues 120 to 140; that stretch reads SKKGGKSPVHPNDHVNKGQSS. The Proton donor/acceptor role is filled by His-188. Ser-318 is a catalytic residue. Residues Ser-319 and 324–326 each bind substrate; that span reads KVN.

This sequence belongs to the class-II fumarase/aspartase family. Fumarase subfamily. As to quaternary structure, homotetramer.

The protein localises to the cytoplasm. It carries out the reaction (S)-malate = fumarate + H2O. It functions in the pathway carbohydrate metabolism; tricarboxylic acid cycle; (S)-malate from fumarate: step 1/1. In terms of biological role, involved in the TCA cycle. Catalyzes the stereospecific interconversion of fumarate to L-malate. In Rickettsia felis (strain ATCC VR-1525 / URRWXCal2) (Rickettsia azadi), this protein is Fumarate hydratase class II.